Here is a 70-residue protein sequence, read N- to C-terminus: Large ribosomal subunit protein bL31 (70 aa).

Zn(2+) contacts are provided by Cys-16, Cys-18, Cys-37, and Cys-40.

It belongs to the bacterial ribosomal protein bL31 family. Type A subfamily. In terms of assembly, part of the 50S ribosomal subunit. It depends on Zn(2+) as a cofactor.

Functionally, binds the 23S rRNA. This is Large ribosomal subunit protein bL31 from Alteromonas mediterranea (strain DSM 17117 / CIP 110805 / LMG 28347 / Deep ecotype).